The chain runs to 432 residues: Histidinol dehydrogenase (432 aa).

3 residues coordinate NAD(+): tyrosine 133, glutamine 194, and asparagine 217. Substrate contacts are provided by serine 240, glutamine 262, and histidine 265. Zn(2+) contacts are provided by glutamine 262 and histidine 265. Catalysis depends on proton acceptor residues glutamate 330 and histidine 331. Histidine 331, aspartate 364, glutamate 418, and histidine 423 together coordinate substrate. Zn(2+) is bound at residue aspartate 364. Histidine 423 lines the Zn(2+) pocket.

Belongs to the histidinol dehydrogenase family. It depends on Zn(2+) as a cofactor.

The catalysed reaction is L-histidinol + 2 NAD(+) + H2O = L-histidine + 2 NADH + 3 H(+). It functions in the pathway amino-acid biosynthesis; L-histidine biosynthesis; L-histidine from 5-phospho-alpha-D-ribose 1-diphosphate: step 9/9. Its function is as follows. Catalyzes the sequential NAD-dependent oxidations of L-histidinol to L-histidinaldehyde and then to L-histidine. The chain is Histidinol dehydrogenase from Nitrosomonas europaea (strain ATCC 19718 / CIP 103999 / KCTC 2705 / NBRC 14298).